The sequence spans 209 residues: tRNA (guanine-N(7)-)-methyltransferase (209 aa).

Residues aspartate 35, glutamate 60, asparagine 87, and aspartate 113 each contribute to the S-adenosyl-L-methionine site. Aspartate 113 is an active-site residue. 2 residues coordinate substrate: lysine 117 and aspartate 149.

This sequence belongs to the class I-like SAM-binding methyltransferase superfamily. TrmB family.

It catalyses the reaction guanosine(46) in tRNA + S-adenosyl-L-methionine = N(7)-methylguanosine(46) in tRNA + S-adenosyl-L-homocysteine. It functions in the pathway tRNA modification; N(7)-methylguanine-tRNA biosynthesis. Its function is as follows. Catalyzes the formation of N(7)-methylguanine at position 46 (m7G46) in tRNA. The polypeptide is tRNA (guanine-N(7)-)-methyltransferase (Prochlorococcus marinus (strain AS9601)).